We begin with the raw amino-acid sequence, 429 residues long: 3-phosphoshikimate 1-carboxyvinyltransferase (429 aa).

Positions 23, 24, and 28 each coordinate 3-phosphoshikimate. Lys-23 is a phosphoenolpyruvate binding site. Positions 95 and 123 each coordinate phosphoenolpyruvate. Residues Ser-168, Gln-170, Asp-316, and Lys-343 each coordinate 3-phosphoshikimate. Position 170 (Gln-170) interacts with phosphoenolpyruvate. Asp-316 functions as the Proton acceptor in the catalytic mechanism. Phosphoenolpyruvate contacts are provided by Arg-347 and Arg-389.

The protein belongs to the EPSP synthase family. In terms of assembly, monomer.

The protein resides in the cytoplasm. The catalysed reaction is 3-phosphoshikimate + phosphoenolpyruvate = 5-O-(1-carboxyvinyl)-3-phosphoshikimate + phosphate. It participates in metabolic intermediate biosynthesis; chorismate biosynthesis; chorismate from D-erythrose 4-phosphate and phosphoenolpyruvate: step 6/7. Its function is as follows. Catalyzes the transfer of the enolpyruvyl moiety of phosphoenolpyruvate (PEP) to the 5-hydroxyl of shikimate-3-phosphate (S3P) to produce enolpyruvyl shikimate-3-phosphate and inorganic phosphate. The sequence is that of 3-phosphoshikimate 1-carboxyvinyltransferase from Bacillus cereus (strain ATCC 10987 / NRS 248).